The chain runs to 428 residues: Cytochrome c biogenesis protein CcsB (428 aa).

Helical transmembrane passes span Leu-14 to Ile-34, Ser-72 to Arg-92, and Ile-162 to Ser-182.

This sequence belongs to the Ccs1/CcsB family. As to quaternary structure, may interact with CcsA.

The protein resides in the cellular thylakoid membrane. Functionally, required during biogenesis of c-type cytochromes (cytochrome c6 and cytochrome f) at the step of heme attachment. The chain is Cytochrome c biogenesis protein CcsB from Prochlorococcus marinus (strain AS9601).